The primary structure comprises 142 residues: Large ribosomal subunit protein uL11 (142 aa).

It belongs to the universal ribosomal protein uL11 family. As to quaternary structure, part of the ribosomal stalk of the 50S ribosomal subunit. Interacts with L10 and the large rRNA to form the base of the stalk. L10 forms an elongated spine to which L12 dimers bind in a sequential fashion forming a multimeric L10(L12)X complex. In terms of processing, one or more lysine residues are methylated.

Functionally, forms part of the ribosomal stalk which helps the ribosome interact with GTP-bound translation factors. In Acidithiobacillus ferrooxidans (strain ATCC 23270 / DSM 14882 / CIP 104768 / NCIMB 8455) (Ferrobacillus ferrooxidans (strain ATCC 23270)), this protein is Large ribosomal subunit protein uL11.